Here is a 606-residue protein sequence, read N- to C-terminus: Mitogen-activated protein kinase kinase kinase 7 (606 aa).

Residues 1–300 are interaction with MAPK8IP1; it reads MSTASAASSS…FPGADEPLQY (300 aa). The region spanning 36–291 is the Protein kinase domain; it reads IEVEEVVGRG…KIMTHLMRYF (256 aa). ATP-binding positions include 42-50 and lysine 63; that span reads VGRGAFGVV. A Glycyl lysine isopeptide (Lys-Gly) (interchain with G-Cter in ubiquitin) cross-link involves residue lysine 72. The Proton acceptor role is filled by aspartate 156. Lysine 158 participates in a covalent cross-link: Glycyl lysine isopeptide (Lys-Gly) (interchain with G-Cter in ubiquitin). (Microbial infection) O-acetylthreonine; by Yersinia YopJ; alternate is present on residues threonine 184 and threonine 187. Phosphothreonine; by autocatalysis; alternate occurs at positions 184 and 187. Serine 192 carries the post-translational modification Phosphoserine; by autocatalysis. A Glycyl lysine isopeptide (Lys-Gly) (interchain with G-Cter in ubiquitin) cross-link involves residue lysine 209. The tract at residues 301–338 is disordered; that stretch reads PCQYSDEGQSNSATSTGSFMDIASTNTSNKSDTNMEQV. The span at 306–338 shows a compositional bias: polar residues; sequence DEGQSNSATSTGSFMDIASTNTSNKSDTNMEQV. Position 341 is a (Microbial infection) O-acetylthreonine; by Yersinia YopJ; alternate (threonine 341). The disordered stretch occupies residues 354 to 391; it reads KNQAKQQSESGRLSLGASRGSSVESLPPTSEGKRMSAD. Low complexity predominate over residues 361–375; sequence SESGRLSLGASRGSS. A phosphoserine mark is found at serine 367, serine 389, and serine 439. Residues 443-452 are compositionally biased toward polar residues; sequence LTVTGTEPGQ. The interval 443-493 is disordered; the sequence is LTVTGTEPGQVSSRSSSPSVRMITTSGPTSEKPTRSHPWTPDDSTDTNGSD. A (Microbial infection) O-acetylthreonine; by Yersinia YopJ; alternate mark is found at threonine 444, threonine 446, and threonine 448. The span at 453 to 463 shows a compositional bias: low complexity; that stretch reads VSSRSSSPSVR. Serine 455 bears the Phosphoserine mark. Positions 464-473 are enriched in polar residues; sequence MITTSGPTSE. Residue threonine 467 is modified to (Microbial infection) O-acetylthreonine; by Yersinia YopJ; alternate.

This sequence belongs to the protein kinase superfamily. STE Ser/Thr protein kinase family. MAP kinase kinase kinase subfamily. Can form homodimer. Binds both upstream activators and downstream substrates in multimolecular complexes. Interacts with TAB1/MAP3K7IP1, TAB2/MAP3K7IP2 and TAB3/MAP3K7IP3. Identified in the TRIKA2 complex composed of MAP3K7/TAK1, TAB1/MAP3K7IP1 and TAB2/MAP3K7IP2. Interacts with PPM1L and PPM1B/PP2CB. Interaction with PP2A and PPP6C leads to its repressed activity. Interacts with TRAF6 and TAB1/MAP3K7IP1; during IL-1 signaling. Interacts with TAOK1 and TAOK2; interaction with TAOK2 interferes with MAP3K7 interaction with IKKA, thus preventing NF-kappa-B activation. Interacts with DYNC2I2 (via WD domains). Interacts with CYLD and RBCK1. Interacts with TGFBR1; induces MAP3K7/TAK1 activation by TRAF6. Interacts with MAPK8IP1 and SMAD6. Interacts with isoform 1 of VRK2. Interacts with DAB2; the interaction is induced by TGF-beta stimulation and may mediate TGF-beta stimulated JNK activation. Interacts with TRIM5. Part of a complex containing ITCH, NDFIP1 and MAP3K7. Interacts with IFIT5; the interaction synergizes the recruitment of IKK to MAP3K7 and enhances IKK phosphorylation. Interacts with PLEKHM1 (via N- and C-terminus). Interacts with TRIM8. Found in a complex with SH3RF1, RAC2, MAP2K7/MKK7, MAPK8IP1/JIP1, MAPK8/JNK1 and MAPK9/JNK2. Interacts with SASH1. Interacts with RIPK1. In terms of assembly, (Microbial infection) Interacts with herpes simplex virus 2 protein US2; this interaction induces MAP3K7 phosphorylation and subsequent activation. The cofactor is Mg(2+). Post-translationally, association with TAB1/MAP3K7IP1 promotes autophosphorylation at Ser-192 and subsequent activation. Association with TAB2/MAP3K7IP2, itself associated with free unanchored Lys-63 polyubiquitin chain, promotes autophosphorylation and subsequent activation of MAP3K7. Dephosphorylation at Ser-192 by PPM1B/PP2CB and at Thr-187 by PP2A and PPP6C leads to inactivation. 'Lys-48'-linked polyubiquitination at Lys-72 is induced by TNFalpha, and leads to proteasomal degradation. Undergoes 'Lys-48'-linked polyubiquitination catalyzed by ITCH. Requires 'Lys-63'-linked polyubiquitination for autophosphorylation and subsequent activation. 'Lys-63'-linked ubiquitination does not lead to proteasomal degradation. Deubiquitinated by CYLD, a protease that selectively cleaves 'Lys-63'-linked ubiquitin chains. Deubiquitinated by Y.enterocolitica YopP. Deubiquitinated by USP19; leading to negative regulation of TNF-alpha- and IL-1beta-triggered NF-kappa-B activation. In terms of processing, (Microbial infection) Cleaved and inactivated by the proteases 3C of coxsackievirus A16 and human enterovirus D68, allowing the virus to disrupt TRAF6-triggered NF-kappa-B induction. Post-translationally, (Microbial infection) Acetylation of Thr-184 and Thr-187 by Yersinia YopJ prevents phosphorylation and activation, thus blocking the MAPK signaling pathway. Isoform 1A is the most abundant in ovary, skeletal muscle, spleen and blood mononuclear cells. Isoform 1B is highly expressed in brain, kidney and small intestine. Isoform 1C is the major form in prostate. Isoform 1D is the less abundant form.

It localises to the cytoplasm. Its subcellular location is the cell membrane. It carries out the reaction L-seryl-[protein] + ATP = O-phospho-L-seryl-[protein] + ADP + H(+). It catalyses the reaction L-threonyl-[protein] + ATP = O-phospho-L-threonyl-[protein] + ADP + H(+). Activated by pro-inflammatory cytokines and in response to physical and chemical stresses, including osmotic stress, oxidative stress, arsenic and ultraviolet light irradiation. Activated by 'Lys-63'-linked polyubiquitination and by autophosphorylation. Association with TAB1/MAP3K7IP1 and TAB2/MAP3K7IP2 promotes activation through autophosphorylation, whereas PPM1B/PP2CB, PP2A and PPP6C dephosphorylation leads to inactivation. Ceramides are also able to activate MAP3K7/TAK1. Serine/threonine kinase which acts as an essential component of the MAP kinase signal transduction pathway. Plays an important role in the cascades of cellular responses evoked by changes in the environment. Mediates signal transduction of TRAF6, various cytokines including interleukin-1 (IL-1), transforming growth factor-beta (TGFB), TGFB-related factors like BMP2 and BMP4, toll-like receptors (TLR), tumor necrosis factor receptor CD40 and B-cell receptor (BCR). Once activated, acts as an upstream activator of the MKK/JNK signal transduction cascade and the p38 MAPK signal transduction cascade through the phosphorylation and activation of several MAP kinase kinases like MAP2K1/MEK1, MAP2K3/MKK3, MAP2K6/MKK6 and MAP2K7/MKK7. These MAP2Ks in turn activate p38 MAPKs and c-jun N-terminal kinases (JNKs); both p38 MAPK and JNK pathways control the transcription factors activator protein-1 (AP-1). Independently of MAP2Ks and p38 MAPKs, acts as a key activator of NF-kappa-B by promoting activation of the I-kappa-B-kinase (IKK) core complex. Mechanistically, recruited to polyubiquitin chains of RIPK2 and IKBKG/NEMO via TAB2/MAP3K7IP2 and TAB3/MAP3K7IP3, and catalyzes phosphorylation and activation of IKBKB/IKKB component of the IKK complex, leading to NF-kappa-B activation. In osmotic stress signaling, plays a major role in the activation of MAPK8/JNK1, but not that of NF-kappa-B. Promotes TRIM5 capsid-specific restriction activity. Phosphorylates RIPK1 at 'Ser-321' which positively regulates RIPK1 interaction with RIPK3 to promote necroptosis but negatively regulates RIPK1 kinase activity and its interaction with FADD to mediate apoptosis. Phosphorylates STING1 in response to cGAMP-activation, promoting association between STEEP1 and STING1 and STING1 translocation to COPII vesicles. This chain is Mitogen-activated protein kinase kinase kinase 7, found in Homo sapiens (Human).